The primary structure comprises 78 residues: Large ribosomal subunit protein bL28 (78 aa).

Positions 1 to 20 (MSRVCQVTGKGPVTGNNISH) are disordered.

It belongs to the bacterial ribosomal protein bL28 family.

The protein is Large ribosomal subunit protein bL28 of Stutzerimonas stutzeri (strain A1501) (Pseudomonas stutzeri).